The following is a 194-amino-acid chain: Putative manganese efflux pump MntP (194 aa).

A run of 6 helical transmembrane segments spans residues 6–26 (LILV…GLAL), 35–55 (WLFA…GLYL), 66–86 (VAAI…LWEA), 109–129 (GVLG…LDAL), 142–162 (VPLT…LGLL), and 174–194 (RAEL…LVGV).

Belongs to the MntP (TC 9.B.29) family.

It is found in the cell membrane. Functionally, probably functions as a manganese efflux pump. The protein is Putative manganese efflux pump MntP of Moorella thermoacetica (strain ATCC 39073 / JCM 9320).